The following is a 166-amino-acid chain: Glycine-rich RNA-binding protein GRP1A (166 aa).

Positions 8-86 (YRCFVGGLAW…RSITVNEAQS (79 aa)) constitute an RRM domain. Residues 68–166 (GMNGQDLDGR…YGGSGGGGGW (99 aa)) are disordered. Gly residues-rich tracts occupy residues 88–146 (GSGG…YGGG) and 153–166 (EGGG…GGGW).

Predominantly expressed in meristematic and growing tissue.

It is found in the nucleus. May play a general role in circadian phenomena associated with meristematic tissue. This Sinapis alba (White mustard) protein is Glycine-rich RNA-binding protein GRP1A.